The sequence spans 204 residues: Proteasome subunit beta type-3-B (204 aa).

It belongs to the peptidase T1B family. As to quaternary structure, component of the 20S core complex of the 26S proteasome. The 26S proteasome is composed of a core protease (CP), known as the 20S proteasome, capped at one or both ends by the 19S regulatory particle (RP/PA700). The 20S proteasome core is composed of 28 subunits that are arranged in four stacked rings, resulting in a barrel-shaped structure. The two end rings are each formed by seven alpha subunits, and the two central rings are each formed by seven beta subunits. The catalytic chamber with the active sites is on the inside of the barrel.

It localises to the cytoplasm. Its subcellular location is the nucleus. Non-catalytic component of the proteasome, a multicatalytic proteinase complex which is characterized by its ability to cleave peptides with Arg, Phe, Tyr, Leu, and Glu adjacent to the leaving group at neutral or slightly basic pH. The proteasome has an ATP-dependent proteolytic activity. This chain is Proteasome subunit beta type-3-B (PBC2), found in Arabidopsis thaliana (Mouse-ear cress).